The sequence spans 431 residues: MVSLEKNDRVMLARQLPLESVALILAGGRGTRLKDLTNKRAKPAVHFGGKFRIIDFALSNCLNSGIRRIGVITQYQSHTLVQHIQRGWSLFSEEMNEFVDLLPAQQRMKGENWYRGTADAVTQNLDIIRRYKAEYVVILAGDHIYKQDYSRMLIDHVEKGARCTVVCMPVPIKEATAFGVMAVDESDKIIDFVEKPANPPAMPGDASKSLASMGIYVFDADYLYELLAADDKDDASSHDFGKDIIPKITREGMAYAHPFPLSCVQSDPQAEPYWRDVGTLEAYWKANLDLASVTPELDMYDQNWPIRTHMESLPPAKFVQDRSGSHGMTLNSLVSGGCIISGSVVVQSVLFPRVRINSFCNIDSAVLLPEVWVGRSCRLRRCVIDRACIIPEGMVIGENAEEDARRFYRSEEGIVLVTREMLRKLQVKQER.

K39 lines the beta-D-fructose 1,6-bisphosphate pocket. Residues R40, H46, and R52 each contribute to the AMP site. Y114 contributes to the alpha-D-glucose 1-phosphate binding site. An AMP-binding site is contributed by R130. Alpha-D-glucose 1-phosphate is bound by residues G179, 194–195 (EK), and S212. The AMP site is built by E370 and R386. Residues 419 to 423 (REMLR) and 429 to 431 (QER) each bind beta-D-fructose 1,6-bisphosphate.

This sequence belongs to the bacterial/plant glucose-1-phosphate adenylyltransferase family. As to quaternary structure, homotetramer.

It catalyses the reaction alpha-D-glucose 1-phosphate + ATP + H(+) = ADP-alpha-D-glucose + diphosphate. Its pathway is glycan biosynthesis; glycogen biosynthesis. Allosterically activated by fructose-1,6-bisphosphate (F16BP) and inhibited by AMP. Involved in the biosynthesis of ADP-glucose, a building block required for the elongation reactions to produce glycogen. Catalyzes the reaction between ATP and alpha-D-glucose 1-phosphate (G1P) to produce pyrophosphate and ADP-Glc. The sequence is that of Glucose-1-phosphate adenylyltransferase from Salmonella dublin (strain CT_02021853).